The primary structure comprises 120 residues: Large ribosomal subunit protein uL18 (120 aa).

This sequence belongs to the universal ribosomal protein uL18 family. As to quaternary structure, part of the 50S ribosomal subunit; part of the 5S rRNA/L5/L18/L25 subcomplex. Contacts the 5S and 23S rRNAs.

Its function is as follows. This is one of the proteins that bind and probably mediate the attachment of the 5S RNA into the large ribosomal subunit, where it forms part of the central protuberance. The polypeptide is Large ribosomal subunit protein uL18 (Brucella suis biovar 1 (strain 1330)).